The sequence spans 512 residues: Acid-sensing ion channel 2 (512 aa).

The Cytoplasmic portion of the chain corresponds to 1 to 37; it reads MDLKESPSEGSLQPSSIQIFANTSTLHGIRHIFVYGP. 2 positions are modified to phosphoserine: Ser-8 and Ser-11. Residues 38–58 form a helical membrane-spanning segment; sequence LTIRRVLWAVAFVGSLGLLLV. Over 59 to 427 the chain is Extracellular; sequence ESSERVSYYF…EQKKAYEVAA (369 aa). 6 disulfides stabilise this stretch: Cys-92–Cys-193, Cys-289–Cys-364, Cys-307–Cys-360, Cys-311–Cys-358, Cys-320–Cys-342, and Cys-322–Cys-334. N-linked (GlcNAc...) asparagine glycosylation is found at Asn-365 and Asn-392. A helical transmembrane segment spans residues 428-448; it reads LLGDIGGQMGLFIGASLLTIL. The GAS motif; ion selectivity filter signature appears at 441-443; that stretch reads GAS. Topologically, residues 449–512 are cytoplasmic; that stretch reads ELFDYIYELI…ALGTLEEIAC (64 aa).

Belongs to the amiloride-sensitive sodium channel (TC 1.A.6) family. ASIC2 subfamily. Can form homotrimers. Heterotrimer; forms functional heterotrimers producing channel with different properties. Forms heterotrimers with ASIC1; while ASIC1 determines current amplitude, ASIC2 influences the properties of the current. Forms heterotrimers with ASIC3; resulting in channels with distinct properties. Interacts with STOM; STOM regulates the gating of ASIC2-containing channels. Interacts with PICK1; promotes ASIC3 phosphorylation by PKC and activation of ASIC2/ASIC3 heterotrimers. In terms of tissue distribution, expressed in sciatic nerve and dorsal root ganglion (DRG) (at protein level). Both isoforms display the same expression pattern except in DRG where isoform 2 is more abundantly expressed. Widely distributed throughout the brain. Highly expressed in the main olfactory bulb, neo- and allo-cortical regions, hippocampal formation, habenula, basolateral amygdaloid nuclei, and cerebellum. In the olfactory system, expressed in the glomerular cell layer, the internal granular layer, and the mitral and internal plexiform cell layers. Within the glomerular layer, restricted to the periglomerular cells. In the neocortex, strongly expressed in the large pyramidal neurons in all cortical layers as well as in the oligo-, astro-, or micro-glia cells. In the hippocampal formation, expressed in dentate granule cells and hilar neurons, as well as in pyramidal cells of CA1-CA3 subfields. Expressed in stratum oriens and radiatum of all subfields. Within the thalamus, expressed moderately in the medial and lateral habenula. In the cerebellar cortex expressed in Purkinje cells and granule cells. Expressed at low levels in choroid plexus.

The protein localises to the cell membrane. It catalyses the reaction Na(+)(in) = Na(+)(out). The catalysed reaction is K(+)(in) = K(+)(out). The enzyme catalyses Li(+)(in) = Li(+)(out). With respect to regulation, inhibited by the diuretic drug amiloride. Inhibited by gadolinium ions, the heterotrimer with ASIC3 being more sensitive. Zn(2+) potentiates the acid activation of ASIC2-containing homomeric and heteromeric channels. The snake venom mambalgin-1 and mambalgin-2 inhibit the homotrimers composed of ASIC1 and ASIC2 and have strong analgesic effects. Its function is as follows. Forms pH-gated trimeric sodium channels that act as postsynaptic excitatory sensors in the nervous system. Upon extracellular acidification, these channels generate rapid, transient inward currents that fully desensitize. Highly selective for sodium, they are permeable to other cations. By forming heterotrimeric channels with ASIC1, could contribute to synaptic plasticity, learning, and memory. Additionally, as acid sensors at nerve terminals, plays a role in mechanosensation and phototransduction. Functionally, has no pH-gated sodium channel activity per se but can associate with other ASICs to produce functional channels with specific properties. This Rattus norvegicus (Rat) protein is Acid-sensing ion channel 2.